Consider the following 128-residue polypeptide: Fluoride-specific ion channel FluC (128 aa).

Transmembrane regions (helical) follow at residues 1–21 (MPER…GATA), 45–65 (LAGC…SLVS), 70–90 (LLLA…MYEI), and 99–119 (IFYS…CLYF). The Na(+) site is built by Gly78 and Thr81.

The protein belongs to the fluoride channel Fluc/FEX (TC 1.A.43) family.

The protein resides in the cell inner membrane. The catalysed reaction is fluoride(in) = fluoride(out). Its activity is regulated as follows. Na(+) is not transported, but it plays an essential structural role and its presence is essential for fluoride channel function. In terms of biological role, fluoride-specific ion channel. Important for reducing fluoride concentration in the cell, thus reducing its toxicity. This is Fluoride-specific ion channel FluC from Chlorobium phaeobacteroides (strain BS1).